The sequence spans 264 residues: [LysW]-aminoadipate/[LysW]-glutamate kinase (264 aa).

Residues 35–36 (GG), Arg-62, and Asn-167 contribute to the substrate site.

The protein belongs to the acetylglutamate kinase family. LysZ subfamily.

The protein resides in the cytoplasm. It carries out the reaction [amino-group carrier protein]-C-terminal-N-(1,4-dicarboxybutan-1-yl)-L-glutamine + ATP = [amino-group carrier protein]-C-terminal-N-(1-carboxy-5-phosphooxy-5-oxopentan-1-yl)-L-glutamine + ADP. The enzyme catalyses [amino-group carrier protein]-C-terminal-gamma-(L-glutamyl)-L-glutamate + ATP = [amino-group carrier protein]-C-terminal-gamma-(5-phospho-L-glutamyl)-L-glutamate + ADP. It participates in amino-acid biosynthesis; L-lysine biosynthesis via AAA pathway; L-lysine from L-alpha-aminoadipate (Thermus route): step 2/5. It functions in the pathway amino-acid biosynthesis; L-arginine biosynthesis. In terms of biological role, involved in both the arginine and lysine biosynthetic pathways. Phosphorylates the LysW-bound precursors glutamate (for arginine biosynthesis), respectively alpha-aminoadipate (for lysine biosynthesis). This chain is [LysW]-aminoadipate/[LysW]-glutamate kinase, found in Saccharolobus islandicus (strain L.S.2.15 / Lassen #1) (Sulfolobus islandicus).